A 628-amino-acid polypeptide reads, in one-letter code: Modular serine protease (628 aa).

The first 25 residues, Met-1–Ala-25, serve as a signal peptide directing secretion. LDL-receptor class A domains follow at residues Ala-26 to Val-64, His-69 to Gly-107, Asn-122 to Gly-163, and Glu-166 to Asn-204. 12 disulfide bridges follow: Cys-27–Cys-39, Cys-34–Cys-52, Cys-46–Cys-63, Cys-70–Cys-82, Cys-77–Cys-95, Cys-89–Cys-106, Cys-123–Cys-135, Cys-130–Cys-149, Cys-143–Cys-162, Cys-167–Cys-179, Cys-174–Cys-192, and Cys-186–Cys-203. Asn-36 is a glycosylation site (N-linked (GlcNAc...) asparagine). N-linked (GlcNAc...) asparagine glycosylation is present at Asn-204. Sushi domains lie at Leu-222 to Lys-285 and Ala-300 to Gln-356. Disulfide bonds link Cys-224–Cys-270, Cys-256–Cys-283, Cys-302–Cys-341, and Cys-326–Cys-354. One can recognise a Peptidase S1 domain in the interval Ser-369–Asn-621. A glycan (N-linked (GlcNAc...) asparagine) is linked at Asn-376. A disulfide bridge connects residues Cys-399 and Cys-415. Catalysis depends on charge relay system residues His-414, Asp-472, and Ser-563. The N-linked (GlcNAc...) asparagine glycan is linked to Asn-621.

The protein belongs to the peptidase S1 family. In terms of processing, may be proteolytically cleaved via an autocatalytic mechanism.

It localises to the secreted. Serine protease that plays a key role in innate immunity by activating the Toll pathway in response to infection with Gram-positive bacteria and fungi. During Gram-positive infection, acts downstream of PGRP-SA and upstream of Grass and Spz, and therefore appears to function in a pathway that links detection of Gram-positive lysine-type peptidoglycans to Toll activation. Functions in a separate pathway to the psh-mediated activation of the Toll pathway. The sequence is that of Modular serine protease from Drosophila melanogaster (Fruit fly).